We begin with the raw amino-acid sequence, 341 residues long: Methionine import ATP-binding protein MetN 2 (341 aa).

An ABC transporter domain is found at 2–241 (IELKEVVKEY…PQHTVTKRFV (240 aa)). ATP is bound at residue 38 to 45 (GFSGAGKS).

It belongs to the ABC transporter superfamily. Methionine importer (TC 3.A.1.24) family. As to quaternary structure, the complex is composed of two ATP-binding proteins (MetN), two transmembrane proteins (MetI) and a solute-binding protein (MetQ).

The protein localises to the cell membrane. It carries out the reaction L-methionine(out) + ATP + H2O = L-methionine(in) + ADP + phosphate + H(+). The enzyme catalyses D-methionine(out) + ATP + H2O = D-methionine(in) + ADP + phosphate + H(+). Functionally, part of the ABC transporter complex MetNIQ involved in methionine import. Responsible for energy coupling to the transport system. This Staphylococcus aureus (strain N315) protein is Methionine import ATP-binding protein MetN 2.